Here is a 2148-residue protein sequence, read N- to C-terminus: Polyketide synthase 1 (2148 aa).

Residues 19–261 (FIFGDQSSCN…TPLAVHAPYH (243 aa)) are N-terminal acylcarrier protein transacylase domain (SAT). The Ketosynthase family 3 (KS3) domain occupies 394 to 829 (ESKIAIIGMS…GGNTALLVED (436 aa)). Residues Cys-566, His-701, and His-745 each act as for beta-ketoacyl synthase activity in the active site. Residues 929 to 1233 (AFVFSGQGSQ…PSLMRNKDGW (305 aa)) are malonyl-CoA:ACP transacylase (MAT) domain. Ser-1018 acts as the For acyl/malonyl transferase activity in catalysis. A product template (PT) domain region spans residues 1310 to 1624 (TASVHRIVHE…RKVLNTAMPP (315 aa)). The N-terminal hotdog fold stretch occupies residues 1314–1447 (HRIVHESVEK…SSLHFEQPKV (134 aa)). The 306-residue stretch at 1314 to 1619 (HRIVHESVEK…FQGIPRKVLN (306 aa)) folds into the PKS/mFAS DH domain. The active-site Proton acceptor; for dehydratase activity is the His-1346. A C-terminal hotdog fold region spans residues 1474 to 1619 (LNSRMSSGVI…FQGIPRKVLN (146 aa)). Asp-1533 (proton donor; for dehydratase activity) is an active-site residue. A disordered region spans residues 1619-1655 (NTAMPPPKSQNEAPVRSGPAKPAAKPPRSASSEHSGH). Residues 1634 to 1650 (RSGPAKPAAKPPRSASS) are compositionally biased toward low complexity. A Carrier 1 domain is found at 1678–1752 (RNPMLPVFKI…DLAAHLGLDT (75 aa)). O-(pantetheine 4'-phosphoryl)serine is present on Ser-1712. Low complexity-rich tracts occupy residues 1757 to 1769 (QSSG…GGLS) and 1779 to 1796 (TSSV…SVSG). The tract at residues 1757 to 1796 (QSSGQSSSFGGLSPRSDSIGEITSSVTTPPSLSPRSSVSG) is disordered. The 78-residue stretch at 1793-1870 (SVSGSQCKDV…SFKHMFQQGH (78 aa)) folds into the Carrier 2 domain. At Ser-1830 the chain carries O-(pantetheine 4'-phosphoryl)serine. The tract at residues 1882–2146 (LKQYRATSTL…ERVAAFIRST (265 aa)) is thioesterase (TE) domain. Catalysis depends on Ser-1973, which acts as the For thioesterase activity.

Its function is as follows. Polyketide synthase; part of the Pks1 gene cluster that mediates the biosynthesis of an anthraquinone derivative pigment that contributes to conidial pigmentation that provides protection from UV radiation, heat and cold stress. The polyketide synthase Pks1 produces 1-acetyl-2,4,6,8-tetrahydroxy-9,10-anthraquinone though condensation of acetyl-CoA with malonyl-CoA. The dehydratase EthD and the laccase Mlac1 further convert the anthraquinone derivative into the final conidial pigment. This is Polyketide synthase 1 from Metarhizium anisopliae (strain ARSEF 549).